Here is a 421-residue protein sequence, read N- to C-terminus: UDP-N-acetylglucosamine 1-carboxyvinyltransferase (421 aa).

22 to 23 contributes to the phosphoenolpyruvate binding site; it reads KN. Arg-94 serves as a coordination point for UDP-N-acetyl-alpha-D-glucosamine. Cys-118 functions as the Proton donor in the catalytic mechanism. The residue at position 118 (Cys-118) is a 2-(S-cysteinyl)pyruvic acid O-phosphothioketal. Residues 163 to 166, Asp-308, and Ile-330 contribute to the UDP-N-acetyl-alpha-D-glucosamine site; that span reads KVSV.

It belongs to the EPSP synthase family. MurA subfamily.

Its subcellular location is the cytoplasm. The catalysed reaction is phosphoenolpyruvate + UDP-N-acetyl-alpha-D-glucosamine = UDP-N-acetyl-3-O-(1-carboxyvinyl)-alpha-D-glucosamine + phosphate. Its pathway is cell wall biogenesis; peptidoglycan biosynthesis. Functionally, cell wall formation. Adds enolpyruvyl to UDP-N-acetylglucosamine. This Orientia tsutsugamushi (strain Ikeda) (Rickettsia tsutsugamushi) protein is UDP-N-acetylglucosamine 1-carboxyvinyltransferase.